The primary structure comprises 543 residues: Bifunctional purine biosynthesis protein PurH (543 aa).

An MGS-like domain is found at asparagine 5–valine 151.

This sequence belongs to the PurH family.

It catalyses the reaction (6R)-10-formyltetrahydrofolate + 5-amino-1-(5-phospho-beta-D-ribosyl)imidazole-4-carboxamide = 5-formamido-1-(5-phospho-D-ribosyl)imidazole-4-carboxamide + (6S)-5,6,7,8-tetrahydrofolate. It carries out the reaction IMP + H2O = 5-formamido-1-(5-phospho-D-ribosyl)imidazole-4-carboxamide. It participates in purine metabolism; IMP biosynthesis via de novo pathway; 5-formamido-1-(5-phospho-D-ribosyl)imidazole-4-carboxamide from 5-amino-1-(5-phospho-D-ribosyl)imidazole-4-carboxamide (10-formyl THF route): step 1/1. Its pathway is purine metabolism; IMP biosynthesis via de novo pathway; IMP from 5-formamido-1-(5-phospho-D-ribosyl)imidazole-4-carboxamide: step 1/1. This chain is Bifunctional purine biosynthesis protein PurH, found in Shewanella oneidensis (strain ATCC 700550 / JCM 31522 / CIP 106686 / LMG 19005 / NCIMB 14063 / MR-1).